The following is a 460-amino-acid chain: Ribosomal protein uS12 methylthiotransferase RimO (460 aa).

The region spanning 16–130 (NKIHFISLGC…ILSAIESKEA (115 aa)) is the MTTase N-terminal domain. Positions 25, 61, 93, 164, 168, and 171 each coordinate [4Fe-4S] cluster. The Radical SAM core domain maps to 150–382 (STPKHYAYLK…SQTQKKNVEK (233 aa)). The region spanning 385 to 455 (KQLVGQIVEA…GYDLVGRVIK (71 aa)) is the TRAM domain.

The protein belongs to the methylthiotransferase family. RimO subfamily. [4Fe-4S] cluster is required as a cofactor.

Its subcellular location is the cytoplasm. It carries out the reaction L-aspartate(89)-[ribosomal protein uS12]-hydrogen + (sulfur carrier)-SH + AH2 + 2 S-adenosyl-L-methionine = 3-methylsulfanyl-L-aspartate(89)-[ribosomal protein uS12]-hydrogen + (sulfur carrier)-H + 5'-deoxyadenosine + L-methionine + A + S-adenosyl-L-homocysteine + 2 H(+). Functionally, catalyzes the methylthiolation of an aspartic acid residue of ribosomal protein uS12. The sequence is that of Ribosomal protein uS12 methylthiotransferase RimO from Chlamydia caviae (strain ATCC VR-813 / DSM 19441 / 03DC25 / GPIC) (Chlamydophila caviae).